The primary structure comprises 376 residues: Dihydroorotate dehydrogenase (quinone) (376 aa).

Residues 78–82 (AGFDK) and T102 each bind FMN. K82 is a binding site for substrate. 127–131 (NRMGF) provides a ligand contact to substrate. N157 and N190 together coordinate FMN. Residue N190 participates in substrate binding. S193 serves as the catalytic Nucleophile. Residue N195 participates in substrate binding. FMN is bound by residues K228 and T256. 257–258 (NT) serves as a coordination point for substrate. FMN contacts are provided by residues G286, G315, and 336 to 337 (YT).

It belongs to the dihydroorotate dehydrogenase family. Type 2 subfamily. Monomer. FMN serves as cofactor.

It localises to the cell membrane. It carries out the reaction (S)-dihydroorotate + a quinone = orotate + a quinol. It functions in the pathway pyrimidine metabolism; UMP biosynthesis via de novo pathway; orotate from (S)-dihydroorotate (quinone route): step 1/1. Functionally, catalyzes the conversion of dihydroorotate to orotate with quinone as electron acceptor. The sequence is that of Dihydroorotate dehydrogenase (quinone) from Trichormus variabilis (strain ATCC 29413 / PCC 7937) (Anabaena variabilis).